The primary structure comprises 230 residues: Phosphoribosylaminoimidazole-succinocarboxamide synthase (230 aa).

The protein belongs to the SAICAR synthetase family.

The enzyme catalyses 5-amino-1-(5-phospho-D-ribosyl)imidazole-4-carboxylate + L-aspartate + ATP = (2S)-2-[5-amino-1-(5-phospho-beta-D-ribosyl)imidazole-4-carboxamido]succinate + ADP + phosphate + 2 H(+). It functions in the pathway purine metabolism; IMP biosynthesis via de novo pathway; 5-amino-1-(5-phospho-D-ribosyl)imidazole-4-carboxamide from 5-amino-1-(5-phospho-D-ribosyl)imidazole-4-carboxylate: step 1/2. The chain is Phosphoribosylaminoimidazole-succinocarboxamide synthase from Thermotoga petrophila (strain ATCC BAA-488 / DSM 13995 / JCM 10881 / RKU-1).